The primary structure comprises 389 residues: Pregnancy-associated glycoprotein 1 (389 aa).

The first 15 residues, 1 to 15 (MKWLVILGLVALSEC), serve as a signal peptide directing secretion. The region spanning 76-386 (YVGNITIGTP…DRGQNRIGLR (311 aa)) is the Peptidase A1 domain. N79 carries N-linked (GlcNAc...) asparagine glycosylation. D94 is an active-site residue. C107 and C112 form a disulfide bridge. The N-linked (GlcNAc...) asparagine glycan is linked to N130. A disulfide bridge connects residues C268 and C272. The active site involves D277. The cysteines at positions 311 and 345 are disulfide-linked. N-linked (GlcNAc...) asparagine glycosylation occurs at N348.

It belongs to the peptidase A1 family. As to expression, expressed throughout the chorion, with the signal localized exclusively over the trophectoderm.

It localises to the secreted. The protein localises to the extracellular space. Its function is as follows. Appears to be proteolytically inactive. The sequence is that of Pregnancy-associated glycoprotein 1 from Sus scrofa (Pig).